A 917-amino-acid polypeptide reads, in one-letter code: Auxin response factor 17 (917 aa).

The segment at residues 134–236 (FCKTLTASDT…QLLLGIRRAN (103 aa)) is a DNA-binding region (TF-B3). The tract at residues 571–649 (SVPNALSPFS…RPTAVPVPDP (79 aa)) is disordered. Composition is skewed to low complexity over residues 576-594 (LSPF…MTLQ) and 604-620 (SYPD…NTST). A PB1 domain is found at 786–870 (ATFVKVYKSG…SCIKILSPQE (85 aa)).

It belongs to the ARF family. As to quaternary structure, homodimers and heterodimers.

Its subcellular location is the nucleus. Auxin response factors (ARFs) are transcriptional factors that bind specifically to the DNA sequence 5'-TGTCTC-3' found in the auxin-responsive promoter elements (AuxREs). This Oryza sativa subsp. indica (Rice) protein is Auxin response factor 17 (ARF17).